Reading from the N-terminus, the 195-residue chain is Nucleoside triphosphate pyrophosphatase (195 aa).

Catalysis depends on aspartate 70, which acts as the Proton acceptor.

The protein belongs to the Maf family. It depends on a divalent metal cation as a cofactor.

The protein localises to the cytoplasm. It carries out the reaction a ribonucleoside 5'-triphosphate + H2O = a ribonucleoside 5'-phosphate + diphosphate + H(+). The enzyme catalyses a 2'-deoxyribonucleoside 5'-triphosphate + H2O = a 2'-deoxyribonucleoside 5'-phosphate + diphosphate + H(+). Functionally, nucleoside triphosphate pyrophosphatase. May have a dual role in cell division arrest and in preventing the incorporation of modified nucleotides into cellular nucleic acids. The sequence is that of Nucleoside triphosphate pyrophosphatase from Cyanothece sp. (strain PCC 7425 / ATCC 29141).